Here is a 149-residue protein sequence, read N- to C-terminus: Cytochrome c oxidase subunit 5A, mitochondrial (149 aa).

It belongs to the cytochrome c oxidase subunit 5A family. Component of the cytochrome c oxidase (complex IV, CIV), a multisubunit enzyme composed of a catalytic core of 3 subunits and several supernumerary subunits. The complex exists as a monomer or a dimer and forms supercomplexes (SCs) in the inner mitochondrial membrane with ubiquinol-cytochrome c oxidoreductase (cytochrome b-c1 complex, complex III, CIII).

Its subcellular location is the mitochondrion inner membrane. It participates in energy metabolism; oxidative phosphorylation. In terms of biological role, component of the cytochrome c oxidase, the last enzyme in the mitochondrial electron transport chain which drives oxidative phosphorylation. The respiratory chain contains 3 multisubunit complexes succinate dehydrogenase (complex II, CII), ubiquinol-cytochrome c oxidoreductase (cytochrome b-c1 complex, complex III, CIII) and cytochrome c oxidase (complex IV, CIV), that cooperate to transfer electrons derived from NADH and succinate to molecular oxygen, creating an electrochemical gradient over the inner membrane that drives transmembrane transport and the ATP synthase. Cytochrome c oxidase is the component of the respiratory chain that catalyzes the reduction of oxygen to water. Electrons originating from reduced cytochrome c in the intermembrane space (IMS) are transferred via the dinuclear copper A center (CU(A)) of subunit 2 and heme A of subunit 1 to the active site in subunit 1, a binuclear center (BNC) formed by heme A3 and copper B (CU(B)). The BNC reduces molecular oxygen to 2 water molecules using 4 electrons from cytochrome c in the IMS and 4 protons from the mitochondrial matrix. The chain is Cytochrome c oxidase subunit 5A, mitochondrial from Drosophila melanogaster (Fruit fly).